Consider the following 347-residue polypeptide: Hyaluronidase conohyal-ad1 (347 aa).

The signal sequence occupies residues 1–18; the sequence is MRAVVVVTGLVVVVVTTT. Residues 19 to 33 constitute a propeptide that is removed on maturation; it reads LSLQDHDVKSASSPL. The disordered stretch occupies residues 27–49; the sequence is KSASSPLSSSVDQGSSGDDCDEG. Residues 28-43 show a composition bias toward low complexity; it reads SASSPLSSSVDQGSSG. A disulfide bridge links cysteine 67 with cysteine 343. Residue glutamate 150 is the Proton donor of the active site.

Belongs to the glycosyl hydrolase 56 family. Post-translationally, contains 4 disulfide bonds. Is N-linked glycosylated at three positions. Expressed by the venom duct.

The protein resides in the secreted. It catalyses the reaction Random hydrolysis of (1-&gt;4)-linkages between N-acetyl-beta-D-glucosamine and D-glucuronate residues in hyaluronate.. Functionally, hyaluronidase catalyzes the hydrolysis of hyaluronic acid (HA), an anionic, nonsulfated glycosaminoglycan distributed widely throughout connective, epithelial, and neural tissues. In venom, they are known to enhance diffusion of the venom by degrading the extracellular matrix. The protein is Hyaluronidase conohyal-ad1 of Conus adamsonii (Rhododendron cone).